Consider the following 70-residue polypeptide: Translation initiation factor IF-1 (70 aa).

One can recognise an S1-like domain in the interval 1 to 70; that stretch reads MKNDKLFLTG…LKLGRITQRK (70 aa).

It belongs to the IF-1 family. Component of the 30S ribosomal translation pre-initiation complex which assembles on the 30S ribosome in the order IF-2 and IF-3, IF-1 and N-formylmethionyl-tRNA(fMet); mRNA recruitment can occur at any time during PIC assembly.

It is found in the cytoplasm. One of the essential components for the initiation of protein synthesis. Stabilizes the binding of IF-2 and IF-3 on the 30S subunit to which N-formylmethionyl-tRNA(fMet) subsequently binds. Helps modulate mRNA selection, yielding the 30S pre-initiation complex (PIC). Upon addition of the 50S ribosomal subunit IF-1, IF-2 and IF-3 are released leaving the mature 70S translation initiation complex. In Mycoplasma genitalium (strain ATCC 33530 / DSM 19775 / NCTC 10195 / G37) (Mycoplasmoides genitalium), this protein is Translation initiation factor IF-1.